The primary structure comprises 297 residues: MKTFLILALRAIVATTATIAVRVPVPQLQPQNPSQQQPQKQVPLVQQQQFPGQQQPFPPQQPYPQQQPFPSQQPYMQLQPFPQPQLPYPQPQLPYPQPQPFRPQQSYPQPQPQYSQPQQPISQQQQQQQQQQQQQQQILQQILQQQLIPCRDVVLQQHSIAHGSSQVLQQSTYQLVQQFCCQQLWQIPEQSRCQAIHNVVHAIILHQQQQQQQQQQQQQQQPLSQVCFQQSQQQYPSGQGSFQPSQQNPQAQGSVQPQQLPQFEEIRNLALETLPAMCNVYIPPYCTIAPVGIFGTN.

Residues 1–20 (MKTFLILALRAIVATTATIA) form the signal peptide. The span at 29–55 (QPQNPSQQQPQKQVPLVQQQQFPGQQQ) shows a compositional bias: low complexity. Disordered stretches follow at residues 29-127 (QPQN…QQQQ) and 234-257 (QYPS…SVQP). Positions 56 to 67 (PFPPQQPYPQQQ) are enriched in pro residues. Low complexity predominate over residues 68 to 80 (PFPSQQPYMQLQP). Positions 81-101 (FPQPQLPYPQPQLPYPQPQPF) are enriched in pro residues. Composition is skewed to low complexity over residues 102-127 (RPQQ…QQQQ) and 234-250 (QYPS…QNPQ).

This sequence belongs to the gliadin/glutenin family. Post-translationally, substrate of transglutaminase.

Its function is as follows. Gliadin is the major seed storage protein in wheat. The chain is Alpha/beta-gliadin A-IV from Triticum aestivum (Wheat).